Consider the following 299-residue polypeptide: 33 kDa chaperonin (299 aa).

Intrachain disulfides connect Cys-234–Cys-236 and Cys-268–Cys-271.

Belongs to the HSP33 family. In terms of processing, under oxidizing conditions two disulfide bonds are formed involving the reactive cysteines. Under reducing conditions zinc is bound to the reactive cysteines and the protein is inactive.

It localises to the cytoplasm. Its function is as follows. Redox regulated molecular chaperone. Protects both thermally unfolding and oxidatively damaged proteins from irreversible aggregation. Plays an important role in the bacterial defense system toward oxidative stress. The polypeptide is 33 kDa chaperonin (Pseudomonas putida (strain ATCC 47054 / DSM 6125 / CFBP 8728 / NCIMB 11950 / KT2440)).